Here is a 275-residue protein sequence, read N- to C-terminus: Large ribosomal subunit protein uL2c (275 aa).

The disordered stretch occupies residues 225–275; the sequence is MNPCDHPHGGGEGRSPIGRPRPVSPWGKPALGQRTRKGHKYSDQMILRRRK.

Belongs to the universal ribosomal protein uL2 family. In terms of assembly, part of the 50S ribosomal subunit.

The protein resides in the plastid. Its subcellular location is the chloroplast. The protein is Large ribosomal subunit protein uL2c (rpl2) of Oltmannsiellopsis viridis (Marine flagellate).